Here is a 359-residue protein sequence, read N- to C-terminus: Pyruvate dehydrogenase E1 component subunit beta, mitochondrial (359 aa).

Residues 1 to 30 (MAAVSGLVRRPLREVSGLLKRRFHWTAPAA) constitute a mitochondrion transit peptide. Phosphotyrosine is present on tyrosine 67. A thiamine diphosphate-binding site is contributed by glutamate 89. The K(+) site is built by isoleucine 142, alanine 190, isoleucine 191, aspartate 193, and asparagine 195. At lysine 354 the chain carries N6-acetyllysine.

As to quaternary structure, heterotetramer of two PDHA1 and two PDHB subunits. The heterotetramer interacts with DLAT, and is part of the multimeric pyruvate dehydrogenase complex that contains multiple copies of pyruvate dehydrogenase (E1), dihydrolipoamide acetyltransferase (DLAT, E2) and lipoamide dehydrogenase (DLD, E3). These subunits are bound to an inner core composed of about 48 DLAT and 12 PDHX molecules. Interacts with DLAT. Thiamine diphosphate serves as cofactor.

It is found in the mitochondrion matrix. The catalysed reaction is N(6)-[(R)-lipoyl]-L-lysyl-[protein] + pyruvate + H(+) = N(6)-[(R)-S(8)-acetyldihydrolipoyl]-L-lysyl-[protein] + CO2. In terms of biological role, the pyruvate dehydrogenase complex catalyzes the overall conversion of pyruvate to acetyl-CoA and CO(2), and thereby links the glycolytic pathway to the tricarboxylic cycle. In Homo sapiens (Human), this protein is Pyruvate dehydrogenase E1 component subunit beta, mitochondrial (PDHB).